Reading from the N-terminus, the 373-residue chain is Probable peptidoglycan glycosyltransferase FtsW (373 aa).

9 helical membrane-spanning segments follow: residues 15-35 (LVIL…VYSA), 48-68 (FYFL…MAVA), 80-100 (AVPI…PGIG), 144-164 (FFST…LILL), 168-188 (DLGA…AAGT), 192-212 (YIIA…MNVD), 278-298 (LGLI…LRGV), 311-331 (FLAF…MAVV), and 342-362 (LPFI…VGIL).

This sequence belongs to the SEDS family. FtsW subfamily.

Its subcellular location is the cell inner membrane. It catalyses the reaction [GlcNAc-(1-&gt;4)-Mur2Ac(oyl-L-Ala-gamma-D-Glu-L-Lys-D-Ala-D-Ala)](n)-di-trans,octa-cis-undecaprenyl diphosphate + beta-D-GlcNAc-(1-&gt;4)-Mur2Ac(oyl-L-Ala-gamma-D-Glu-L-Lys-D-Ala-D-Ala)-di-trans,octa-cis-undecaprenyl diphosphate = [GlcNAc-(1-&gt;4)-Mur2Ac(oyl-L-Ala-gamma-D-Glu-L-Lys-D-Ala-D-Ala)](n+1)-di-trans,octa-cis-undecaprenyl diphosphate + di-trans,octa-cis-undecaprenyl diphosphate + H(+). The protein operates within cell wall biogenesis; peptidoglycan biosynthesis. Peptidoglycan polymerase that is essential for cell division. The protein is Probable peptidoglycan glycosyltransferase FtsW of Geobacter sulfurreducens (strain DL-1 / KN400).